The primary structure comprises 160 residues: Cytochrome b6-f complex subunit 4 (160 aa).

Over 1–35 (MATLKKPDLSDPKLRAKLAKGMGHNYYGEPAWPND) the chain is Cytoplasmic. A helical transmembrane segment spans residues 36 to 56 (LLYVFPVVIMGTFACIVALSV). The Lumenal, thylakoid portion of the chain corresponds to 57–94 (LDPAMVGEPADPFATPLEILPEWYLYPVFQILRSVPNK). A helical transmembrane segment spans residues 95–115 (LLGVLLMASVPLGLILVPFIE). At 116 to 130 (NVNKFQNPFRRPVAT) the chain is on the cytoplasmic side. A helical transmembrane segment spans residues 131 to 151 (TIFLFGTLVTIWLGIGATFPL). The Lumenal, thylakoid portion of the chain corresponds to 152 to 160 (DKTLTLGLF).

Belongs to the cytochrome b family. PetD subfamily. In terms of assembly, the 4 large subunits of the cytochrome b6-f complex are cytochrome b6, subunit IV (17 kDa polypeptide, PetD), cytochrome f and the Rieske protein, while the 4 small subunits are PetG, PetL, PetM and PetN. The complex functions as a dimer.

It localises to the cellular thylakoid membrane. Its function is as follows. Component of the cytochrome b6-f complex, which mediates electron transfer between photosystem II (PSII) and photosystem I (PSI), cyclic electron flow around PSI, and state transitions. In Mastigocladus laminosus (Fischerella sp.), this protein is Cytochrome b6-f complex subunit 4.